Here is a 139-residue protein sequence, read N- to C-terminus: Transmembrane protein 250 (139 aa).

2 helical membrane passes run 56 to 76 and 116 to 136; these read FLLYFSCSLFTAALWGALAAL and VYGIHVTMLLVGGLGWCFMVF.

(Microbial infection) Interacts with herpes simplex virus 1/HHV-1 protein CVC2/UL25.

It is found in the membrane. The protein resides in the nucleus. It localises to the cytoplasm. In terms of biological role, may play a role in cell proliferation by promoting progression into S phase. Its function is as follows. (Microbial infection) Promotes human herpes simplex virus 1/HHV-1 proliferation. The protein is Transmembrane protein 250 of Homo sapiens (Human).